A 267-amino-acid chain; its full sequence is Indole-3-glycerol phosphate synthase (267 aa).

Belongs to the TrpC family.

It carries out the reaction 1-(2-carboxyphenylamino)-1-deoxy-D-ribulose 5-phosphate + H(+) = (1S,2R)-1-C-(indol-3-yl)glycerol 3-phosphate + CO2 + H2O. It participates in amino-acid biosynthesis; L-tryptophan biosynthesis; L-tryptophan from chorismate: step 4/5. The polypeptide is Indole-3-glycerol phosphate synthase (Dichelobacter nodosus (strain VCS1703A)).